Reading from the N-terminus, the 563-residue chain is Methylcrotonoyl-CoA carboxylase beta chain, mitochondrial (563 aa).

A mitochondrion-targeting transit peptide spans 1–22 (MWGALRSALRPCCRAAVPPQRA). The CoA carboxyltransferase N-terminal domain maps to 49–306 (MKALVSQLHE…QKKMDVTIEP (258 aa)). A carboxyltransferase region spans residues 49-555 (MKALVSQLHE…SAALNAPIQR (507 aa)). Lys-70 bears the N6-acetyllysine; alternate mark. Residue Lys-70 is modified to N6-succinyllysine; alternate. Lys-141 is subject to N6-succinyllysine. In terms of domain architecture, CoA carboxyltransferase C-terminal spans 309–555 (EPLFPADELY…SAALNAPIQR (247 aa)). The interval 343 to 372 (RFNEFKALYGDTLVTGFARIFGYPVGIIGN) is acyl-CoA binding. The residue at position 433 (Lys-433) is an N6-succinyllysine. Position 495 is an N6-acetyllysine; alternate (Lys-495). Position 495 is an N6-succinyllysine; alternate (Lys-495). Position 511 is an N6-acetyllysine (Lys-511).

This sequence belongs to the AccD/PCCB family. In terms of assembly, probably a dodecamer composed of six biotin-containing alpha subunits (MCCC1) and six beta (MCCC2) subunits.

The protein resides in the mitochondrion matrix. It carries out the reaction 3-methylbut-2-enoyl-CoA + hydrogencarbonate + ATP = 3-methyl-(2E)-glutaconyl-CoA + ADP + phosphate + H(+). The protein operates within amino-acid degradation; L-leucine degradation; (S)-3-hydroxy-3-methylglutaryl-CoA from 3-isovaleryl-CoA: step 2/3. Carboxyltransferase subunit of the 3-methylcrotonyl-CoA carboxylase, an enzyme that catalyzes the conversion of 3-methylcrotonyl-CoA to 3-methylglutaconyl-CoA, a critical step for leucine and isovaleric acid catabolism. This Mus musculus (Mouse) protein is Methylcrotonoyl-CoA carboxylase beta chain, mitochondrial (Mccc2).